A 988-amino-acid chain; its full sequence is Exportin-T (988 aa).

It belongs to the exportin family. In terms of tissue distribution, expressed in young leaves, growing leaf blades, young floral organs and root tips.

It is found in the nucleus. It localises to the cytoplasm. Functionally, probable tRNA nucleus export receptor which regulates tRNA processing and facilitates tRNA translocation across the nuclear pore complex. Is required for proper activity of the shoot apical meristem (SAM) and correct leaf initiation at different developmental stages, and may play a role in floral patterning. This Arabidopsis thaliana (Mouse-ear cress) protein is Exportin-T (PSD).